We begin with the raw amino-acid sequence, 313 residues long: Ribosomal RNA small subunit methyltransferase H (313 aa).

Residues 35-37 (GGH), D55, F79, D101, and Q108 contribute to the S-adenosyl-L-methionine site.

The protein belongs to the methyltransferase superfamily. RsmH family.

The protein localises to the cytoplasm. The enzyme catalyses cytidine(1402) in 16S rRNA + S-adenosyl-L-methionine = N(4)-methylcytidine(1402) in 16S rRNA + S-adenosyl-L-homocysteine + H(+). In terms of biological role, specifically methylates the N4 position of cytidine in position 1402 (C1402) of 16S rRNA. This Shigella dysenteriae serotype 1 (strain Sd197) protein is Ribosomal RNA small subunit methyltransferase H.